Here is a 455-residue protein sequence, read N- to C-terminus: Pup--protein ligase (455 aa).

Mg(2+) is bound at residue Glu12. Position 56 (Arg56) interacts with ATP. Tyr58 contributes to the Mg(2+) binding site. Asp60 serves as the catalytic Proton acceptor. Glu66 lines the Mg(2+) pocket. ATP is bound by residues Thr69 and Trp422.

This sequence belongs to the Pup ligase/Pup deamidase family. Pup-conjugating enzyme subfamily.

The enzyme catalyses ATP + [prokaryotic ubiquitin-like protein]-L-glutamate + [protein]-L-lysine = ADP + phosphate + N(6)-([prokaryotic ubiquitin-like protein]-gamma-L-glutamyl)-[protein]-L-lysine.. It participates in protein degradation; proteasomal Pup-dependent pathway. It functions in the pathway protein modification; protein pupylation. Catalyzes the covalent attachment of the prokaryotic ubiquitin-like protein modifier Pup to the proteasomal substrate proteins, thereby targeting them for proteasomal degradation. This tagging system is termed pupylation. The ligation reaction involves the side-chain carboxylate of the C-terminal glutamate of Pup and the side-chain amino group of a substrate lysine. This Acidimicrobium ferrooxidans (strain DSM 10331 / JCM 15462 / NBRC 103882 / ICP) protein is Pup--protein ligase.